The chain runs to 99 residues: ATP-dependent Clp protease adapter protein ClpS (99 aa).

This sequence belongs to the ClpS family. In terms of assembly, binds to the N-terminal domain of the chaperone ClpA.

Functionally, involved in the modulation of the specificity of the ClpAP-mediated ATP-dependent protein degradation. In Helicobacter hepaticus (strain ATCC 51449 / 3B1), this protein is ATP-dependent Clp protease adapter protein ClpS.